We begin with the raw amino-acid sequence, 94 residues long: Integration host factor subunit beta (94 aa).

Belongs to the bacterial histone-like protein family. As to quaternary structure, heterodimer of an alpha and a beta chain.

Functionally, this protein is one of the two subunits of integration host factor, a specific DNA-binding protein that functions in genetic recombination as well as in transcriptional and translational control. The polypeptide is Integration host factor subunit beta (Mesorhizobium japonicum (strain LMG 29417 / CECT 9101 / MAFF 303099) (Mesorhizobium loti (strain MAFF 303099))).